The primary structure comprises 434 residues: F-box/LRR-repeat protein 21 (434 aa).

The 47-residue stretch at 39–85 (LLDWGTLPHHVILQIFQYLPLIDRARASSVCRRWNEVFHIPDLWRKF) folds into the F-box domain. 6 LRR repeats span residues 187–213 (DTPVDDPSLKILVANNSDTLRLLKMSS), 214–239 (CPHVSSDGILCVADHCQGLRELALNY), 242–265 (LSDEILLALSSETHVNLEHLRIDV), 322–347 (GRSVSRAILGRIGLNCPRLIELVVCA), 349–374 (GLLPLDSELIRIAKHCKNLTSLGLSE), and 375–400 (CEVSCSAFVEFVRLCGRRLTQLSIME).

In terms of assembly, part of the SCF (SKP1-CUL1-F-box) E3 ubiquitin-protein ligase complex SCF(FBXL21) composed of CUL1, SKP1, RBX1 and FBXL21. Interacts with CRY1 and CRY2. As to expression, expressed in the hypothalamus, especially in the suprachiasmatic nucleus (SCN). Expression is driven by the core-clock. There is a pronounced diurnal and circadian expression rhythms rising rapidly at the start of the day and declining at the onset of the night.

The protein resides in the cytoplasm. It localises to the cytosol. It is found in the nucleus. It participates in protein modification; protein ubiquitination. Its function is as follows. Substrate-recognition component of the SCF(FBXL21) E3 ubiquitin ligase complex involved in circadian rhythm function. Plays a key role in the maintenance of both the speed and the robustness of the circadian clock oscillation. The SCF(FBXL21) complex mainly acts in the cytosol and mediates ubiquitination of CRY proteins (CRY1 and CRY2), leading to CRY proteins stabilization. The SCF(FBXL21) complex counteracts the activity of the SCF(FBXL3) complex and protects CRY proteins from degradation. Involved in the hypothalamic suprachiasmatic nucleus (SCN) clock regulating temporal organization of the daily activities. This Mus musculus (Mouse) protein is F-box/LRR-repeat protein 21 (Fbxl21).